A 544-amino-acid polypeptide reads, in one-letter code: Formate--tetrahydrofolate ligase (544 aa).

Position 63–70 (63–70) interacts with ATP; that stretch reads TPAGEGKS.

This sequence belongs to the formate--tetrahydrofolate ligase family.

The catalysed reaction is (6S)-5,6,7,8-tetrahydrofolate + formate + ATP = (6R)-10-formyltetrahydrofolate + ADP + phosphate. Its pathway is one-carbon metabolism; tetrahydrofolate interconversion. The sequence is that of Formate--tetrahydrofolate ligase from Fusobacterium nucleatum subsp. nucleatum (strain ATCC 25586 / DSM 15643 / BCRC 10681 / CIP 101130 / JCM 8532 / KCTC 2640 / LMG 13131 / VPI 4355).